The following is a 525-amino-acid chain: MAPLSTPESISREISVSSDASADESTSLDQMRAPKRRRLSESSTDSYTAAPAPLPSLSRIKKKSSSTNATSSRKDDENPVLIKDALEIGLNAEENSFKALNVAPWLVGSLTTMAVRKPTAIQRACIPEILKGRDCIGGSRTGSGKTIAFSVPILQKWAEDPFGIFAVILTPTRELALQIFEQIKAISAPQSMKPVLITGGTDMRSQAIELAGRPHVVVATPGRLADHINTSGTDTVAGLKRVRMVVLDEADRLLSPGPGSMLPDVETCLSFLPGPSQRQTLLFTATLTPEVRALKSMPQTPGKPPIFVTEISTEAKDTVPPTLRTTYVQVPLTHREAFLHVLLSTESNITKSAIVFTNTTKSADLLERLLRSLGHRVTSLHSLLPQSERNSNLARFRASAARVLVATDVASRGLDIPSVSLVVNFEVPRNPDDYVHRVGRTARAGRTGEAVTLVGQRDVQLVLAIEERIGRKMVEYEEEGVNLEARVAKGSLLKEVGAAKREAMVEIDEGRDVLGRKRNKLKKVR.

Residues 1-29 show a composition bias toward polar residues; the sequence is MAPLSTPESISREISVSSDASADESTSLD. Positions 1–76 are disordered; it reads MAPLSTPESI…TNATSSRKDD (76 aa). A Q motif motif is present at residues 95-123; the sequence is NSFKALNVAPWLVGSLTTMAVRKPTAIQR. One can recognise a Helicase ATP-binding domain in the interval 126-305; it reads IPEILKGRDC…SMPQTPGKPP (180 aa). Residue 139-146 participates in ATP binding; that stretch reads SRTGSGKT. A DEAD box motif is present at residues 248–251; that stretch reads DEAD. In terms of domain architecture, Helicase C-terminal spans 337–484; the sequence is AFLHVLLSTE…EYEEEGVNLE (148 aa).

It belongs to the DEAD box helicase family. DDX49/DBP8 subfamily.

The protein localises to the nucleus. The protein resides in the nucleolus. It carries out the reaction ATP + H2O = ADP + phosphate + H(+). Its function is as follows. ATP-binding RNA helicase involved in 40S ribosomal subunit biogenesis and is required for the normal formation of 18S rRNAs through pre-rRNA processing at A0, A1 and A2 sites. Required for vegetative growth. The chain is ATP-dependent RNA helicase dbp8 (dbp8) from Emericella nidulans (strain FGSC A4 / ATCC 38163 / CBS 112.46 / NRRL 194 / M139) (Aspergillus nidulans).